The primary structure comprises 127 residues: Photosystem II reaction center Psb28 protein (127 aa).

The disordered stretch occupies residues 108 to 127; that stretch reads LGYSQSQDSDQTEGADNQQA. Residues 109–127 show a composition bias toward polar residues; sequence GYSQSQDSDQTEGADNQQA.

Belongs to the Psb28 family. Part of the photosystem II complex.

It localises to the cellular thylakoid membrane. This chain is Photosystem II reaction center Psb28 protein, found in Synechococcus sp. (strain CC9605).